The sequence spans 525 residues: Rho guanine nucleotide exchange factor gef3 (525 aa).

A DH domain is found at 72-268; it reads AIISVLEEFR…EIASQRMNEL (197 aa).

The protein localises to the cytoplasm. Its function is as follows. Has a role in the control of cell polarity and cytokinesis. Involved in bipolar growth and septum formation. The chain is Rho guanine nucleotide exchange factor gef3 (gef3) from Schizosaccharomyces pombe (strain 972 / ATCC 24843) (Fission yeast).